Here is a 167-residue protein sequence, read N- to C-terminus: Lipoprotein signal peptidase (167 aa).

Transmembrane regions (helical) follow at residues 67–87 (WILV…LWRA) and 91–111 (LVAL…IDRI). Catalysis depends on residues Asp118 and Asp136. A helical transmembrane segment spans residues 127 to 147 (FSWYVFNLADAAIVAGVALLI).

Belongs to the peptidase A8 family.

The protein resides in the cell inner membrane. The catalysed reaction is Release of signal peptides from bacterial membrane prolipoproteins. Hydrolyzes -Xaa-Yaa-Zaa-|-(S,diacylglyceryl)Cys-, in which Xaa is hydrophobic (preferably Leu), and Yaa (Ala or Ser) and Zaa (Gly or Ala) have small, neutral side chains.. Its pathway is protein modification; lipoprotein biosynthesis (signal peptide cleavage). In terms of biological role, this protein specifically catalyzes the removal of signal peptides from prolipoproteins. This chain is Lipoprotein signal peptidase, found in Beijerinckia indica subsp. indica (strain ATCC 9039 / DSM 1715 / NCIMB 8712).